A 164-amino-acid chain; its full sequence is MVNPTVFFDIAVDGEPLGRVSFELFADKVPKTAENFRALSTGEKGFGYKGSCFHRIIPGFMCQGGDFTRHNGTGGKSIYGEKFDDENFILKHTGPGILSMANAGPNTNGSQFFICTAKTEWLDGKHVVFGKVKEGMNIVEAMERFGSRNGKTSKKITIADCGQI.

The residue at position 1 (Met1) is an N-acetylmethionine. Val2 is subject to N-acetylvaline; in Peptidyl-prolyl cis-trans isomerase A, N-terminally processed. One can recognise a PPIase cyclophilin-type domain in the interval 7 to 163 (FFDIAVDGEP…KKITIADCGQ (157 aa)). N6-acetyllysine; alternate is present on Lys28. A Glycyl lysine isopeptide (Lys-Gly) (interchain with G-Cter in SUMO2); alternate cross-link involves residue Lys28. A Glycyl lysine isopeptide (Lys-Gly) (interchain with G-Cter in ubiquitin); alternate cross-link involves residue Lys28. Lys44 and Lys76 each carry N6-acetyllysine. Cysteines 62 and 161 form a disulfide. The residue at position 77 (Ser77) is a Phosphoserine. Position 82 is an N6-acetyllysine; alternate (Lys82). Residue Lys82 forms a Glycyl lysine isopeptide (Lys-Gly) (interchain with G-Cter in SUMO2); alternate linkage. Thr93 carries the phosphothreonine modification. A glycan (N-linked (GlcNAc...) asparagine) is linked at Asn108. Residues Lys125, Lys131, and Lys133 each carry the N6-acetyllysine modification.

This sequence belongs to the cyclophilin-type PPIase family. PPIase A subfamily. As to quaternary structure, interacts with protein phosphatase PPP3CA/calcineurin A. Interacts with isoform 2 of BSG/CD147. Interacts with FOXO1; the interaction promotes FOXO1 dephosphorylation, nuclear accumulation and transcriptional activity. Interacts with integrin ITGA2B:ITGB3; the interaction is ROS and peptidyl-prolyl cis-trans isomerase (PPIase) activity-dependent and is increased in the presence of thrombin. Interacts with MAP3K5. Interacts with TARDBP; the interaction is dependent on the RNA-binding activity of TARDBP and the PPIase activity of PPIA/CYPA and the acetylation of PPIA/CYPA at Lys-125 favors the interaction. Interacts with HNRNPA1, HNRNPA2B1, HNRNPC, RBMX, HNRNPK and HNRNPM. Acetylation at Lys-125 markedly inhibits catalysis of cis to trans isomerization. PPIA acetylation also antagonizes the immunosuppressive effects of cyclosporine by inhibiting the sequential steps of cyclosporine binding and calcineurin inhibition. Acetylation at Lys-125 favors the interaction with TARDBP.

The protein resides in the cytoplasm. It is found in the secreted. The protein localises to the nucleus. The catalysed reaction is [protein]-peptidylproline (omega=180) = [protein]-peptidylproline (omega=0). With respect to regulation, binds cyclosporin A (CsA). CsA mediates some of its effects via an inhibitory action on PPIase. Functionally, catalyzes the cis-trans isomerization of proline imidic peptide bonds in oligopeptides. Exerts a strong chemotactic effect on leukocytes partly through activation of one of its membrane receptors BSG/CD147, initiating a signaling cascade that culminates in MAPK/ERK activation. Activates endothelial cells (ECs) in a proinflammatory manner by stimulating activation of NF-kappa-B and ERK, JNK and p38 MAP-kinases and by inducing expression of adhesion molecules including SELE and VCAM1. Induces apoptosis in ECs by promoting the FOXO1-dependent expression of CCL2 and BCL2L11 which are involved in EC chemotaxis and apoptosis. In response to oxidative stress, initiates proapoptotic and antiapoptotic signaling in ECs via activation of NF-kappa-B and AKT1 and up-regulation of antiapoptotic protein BCL2. Negatively regulates MAP3K5/ASK1 kinase activity, autophosphorylation and oxidative stress-induced apoptosis mediated by MAP3K5/ASK1. Necessary for the assembly of TARDBP in heterogeneous nuclear ribonucleoprotein (hnRNP) complexes and regulates TARDBP binding to RNA UG repeats and TARDBP-dependent expression of HDAC6, ATG7 and VCP which are involved in clearance of protein aggregates. Plays an important role in platelet activation and aggregation. Regulates calcium mobilization and integrin ITGA2B:ITGB3 bidirectional signaling via increased ROS production as well as by facilitating the interaction between integrin and the cell cytoskeleton. Binds heparan sulfate glycosaminoglycans. The chain is Peptidyl-prolyl cis-trans isomerase A (PPIA) from Bos taurus (Bovine).